Reading from the N-terminus, the 199-residue chain is Probable GTP-binding protein EngB (199 aa).

Residues Ile25 to Arg199 form the EngB-type G domain. The Mg(2+) site is built by Ser40 and Thr62.

The protein belongs to the TRAFAC class TrmE-Era-EngA-EngB-Septin-like GTPase superfamily. EngB GTPase family. Requires Mg(2+) as cofactor.

Functionally, necessary for normal cell division and for the maintenance of normal septation. The protein is Probable GTP-binding protein EngB of Blochmanniella pennsylvanica (strain BPEN).